The primary structure comprises 219 residues: Probable nicotinate-nucleotide adenylyltransferase (219 aa).

The protein belongs to the NadD family.

It carries out the reaction nicotinate beta-D-ribonucleotide + ATP + H(+) = deamido-NAD(+) + diphosphate. The protein operates within cofactor biosynthesis; NAD(+) biosynthesis; deamido-NAD(+) from nicotinate D-ribonucleotide: step 1/1. Functionally, catalyzes the reversible adenylation of nicotinate mononucleotide (NaMN) to nicotinic acid adenine dinucleotide (NaAD). This is Probable nicotinate-nucleotide adenylyltransferase from Pseudomonas putida (strain GB-1).